A 150-amino-acid chain; its full sequence is Large ribosomal subunit protein uL13 (150 aa).

Positions 130–150 (EHPHAAQQPKTLQLDPAASAQ) are disordered.

Belongs to the universal ribosomal protein uL13 family. In terms of assembly, part of the 50S ribosomal subunit.

Its function is as follows. This protein is one of the early assembly proteins of the 50S ribosomal subunit, although it is not seen to bind rRNA by itself. It is important during the early stages of 50S assembly. This is Large ribosomal subunit protein uL13 from Synechococcus sp. (strain CC9311).